A 201-amino-acid chain; its full sequence is MDHCPRLYLASASPRRRELLTQVGLAHTVLHLPAPPGEDEPQWPGEAAADYVLRTARDKAQRGQIWMREQNLPALPLLAADTTVILDGRVLGKPADRSDAVAMLAALSGTKHEVRTAVVLVHEDRLYEAVSITHVSMRALTAAERERYCDSGEPYGKAGAYGIQGLAGSFISHIDGSYSGVMGLPLFETAELLRRAGIALP.

D81 functions as the Proton acceptor in the catalytic mechanism.

This sequence belongs to the Maf family. YhdE subfamily. A divalent metal cation is required as a cofactor.

The protein localises to the cytoplasm. The catalysed reaction is dTTP + H2O = dTMP + diphosphate + H(+). It carries out the reaction UTP + H2O = UMP + diphosphate + H(+). Its function is as follows. Nucleoside triphosphate pyrophosphatase that hydrolyzes dTTP and UTP. May have a dual role in cell division arrest and in preventing the incorporation of modified nucleotides into cellular nucleic acids. In Bordetella avium (strain 197N), this protein is dTTP/UTP pyrophosphatase.